The following is a 774-amino-acid chain: Cilium assembly protein DZIP1L (774 aa).

A C2H2-type zinc finger spans residues 166–189 (HTCHLCDKTFMNATFLRGHIQRRH). A coiled-coil region spans residues 204–450 (LGEVLEELRA…RKVLAALRKN (247 aa)). Disordered regions lie at residues 415-435 (MPKA…ASLE), 515-674 (NKEV…ASSG), and 686-774 (KQLE…IPGW). Over residues 421–433 (TEEDSSEEELEAS) the composition is skewed to acidic residues. Residues serine 425 and serine 426 each carry the phosphoserine modification. Basic and acidic residues predominate over residues 515 to 526 (NKEVSSRVKQRW). The segment covering 597–616 (GPSSTPVSPGSGLSSTPPFS) has biased composition (low complexity).

Belongs to the DZIP C2H2-type zinc-finger protein family. Interacts with SEPTIN2.

The protein resides in the cytoplasm. It is found in the cytoskeleton. Its subcellular location is the cilium basal body. The protein localises to the microtubule organizing center. It localises to the centrosome. The protein resides in the centriole. In terms of biological role, involved in primary cilium formation. Probably acts as a transition zone protein required for localization of PKD1/PC1 and PKD2/PC2 to the ciliary membrane. The sequence is that of Cilium assembly protein DZIP1L from Mus musculus (Mouse).